The primary structure comprises 160 residues: MSGDGIPSLSVGDASGISLAIVASTWHDQICTALLEGAQRVATEAGIDRPTVVRVLGAIEIPVVAQALARTHDAVVALGVVIQGETPHFGYVCDAVTTGLTRVSLDTSTPVANGVLTVNNEQQAIDRAGLPGSAEDKGAQAAAAALDTALTLRRLRQPWA.

5-amino-6-(D-ribitylamino)uracil-binding positions include Trp-26, 58-60 (AIE), and 80-82 (VVI). 85–86 (ET) is a (2S)-2-hydroxy-3-oxobutyl phosphate binding site. The active-site Proton donor is the His-88. A 5-amino-6-(D-ribitylamino)uracil-binding site is contributed by Asn-113. Residue Arg-127 coordinates (2S)-2-hydroxy-3-oxobutyl phosphate.

This sequence belongs to the DMRL synthase family. In terms of assembly, homopentamer.

It carries out the reaction (2S)-2-hydroxy-3-oxobutyl phosphate + 5-amino-6-(D-ribitylamino)uracil = 6,7-dimethyl-8-(1-D-ribityl)lumazine + phosphate + 2 H2O + H(+). The protein operates within cofactor biosynthesis; riboflavin biosynthesis; riboflavin from 2-hydroxy-3-oxobutyl phosphate and 5-amino-6-(D-ribitylamino)uracil: step 1/2. Its function is as follows. Catalyzes the formation of 6,7-dimethyl-8-ribityllumazine by condensation of 5-amino-6-(D-ribitylamino)uracil with 3,4-dihydroxy-2-butanone 4-phosphate. This is the penultimate step in the biosynthesis of riboflavin. The chain is 6,7-dimethyl-8-ribityllumazine synthase from Mycobacteroides abscessus (strain ATCC 19977 / DSM 44196 / CCUG 20993 / CIP 104536 / JCM 13569 / NCTC 13031 / TMC 1543 / L948) (Mycobacterium abscessus).